The primary structure comprises 341 residues: MLILTIETSCDETAAAVVRDGRTVLSSIVATQVKDHAVYGGVVPEIASRKHLESIPVVIDEALRTASVSLDAIEGVAVTQGPGLAGALLVGTAVAKAIAFARRLPIVGVNHIEGHLSAIFLEREVAFPFVALAVSGGHTHLYRVDGIGRYTTLGQTRDDAAGEAFDKVAKLLGLPYPGGVEIDRLAAEGDPASISFPRPLLHDGSFNFSFSGLKTAVLNHVRKNPVQEDGQQLRDLCASFQRAACDVLVTKTLLAAETEGIGRVVVAGGVACNSALRRDMAREAADRGIELAIPSPSLCSDNAAMLAVPGDFYLSRGISDGLSLDALVNWPLDTIRTRLES.

The Fe cation site is built by histidine 111 and histidine 115. Substrate contacts are provided by residues 133-137, aspartate 166, glycine 179, aspartate 183, and asparagine 273; that span reads AVSGG. Residue aspartate 301 coordinates Fe cation.

This sequence belongs to the KAE1 / TsaD family. Fe(2+) serves as cofactor.

It is found in the cytoplasm. The enzyme catalyses L-threonylcarbamoyladenylate + adenosine(37) in tRNA = N(6)-L-threonylcarbamoyladenosine(37) in tRNA + AMP + H(+). Functionally, required for the formation of a threonylcarbamoyl group on adenosine at position 37 (t(6)A37) in tRNAs that read codons beginning with adenine. Is involved in the transfer of the threonylcarbamoyl moiety of threonylcarbamoyl-AMP (TC-AMP) to the N6 group of A37, together with TsaE and TsaB. TsaD likely plays a direct catalytic role in this reaction. This is tRNA N6-adenosine threonylcarbamoyltransferase from Geobacter metallireducens (strain ATCC 53774 / DSM 7210 / GS-15).